We begin with the raw amino-acid sequence, 431 residues long: UDP-N-acetylglucosamine 1-carboxyvinyltransferase (431 aa).

Residue 22-23 participates in phosphoenolpyruvate binding; it reads KN. Arg-92 is a binding site for UDP-N-acetyl-alpha-D-glucosamine. Catalysis depends on Asp-116, which acts as the Proton donor. UDP-N-acetyl-alpha-D-glucosamine-binding positions include 121–125, Asp-307, and Ile-330; that span reads RPIDQ.

It belongs to the EPSP synthase family. MurA subfamily.

It is found in the cytoplasm. The catalysed reaction is phosphoenolpyruvate + UDP-N-acetyl-alpha-D-glucosamine = UDP-N-acetyl-3-O-(1-carboxyvinyl)-alpha-D-glucosamine + phosphate. It functions in the pathway cell wall biogenesis; peptidoglycan biosynthesis. Its function is as follows. Cell wall formation. Adds enolpyruvyl to UDP-N-acetylglucosamine. This is UDP-N-acetylglucosamine 1-carboxyvinyltransferase from Lactobacillus acidophilus (strain ATCC 700396 / NCK56 / N2 / NCFM).